A 431-amino-acid chain; its full sequence is Glutamate--tRNA ligase 1 (431 aa).

The 'HIGH' region signature appears at 6-16; the sequence is PSPTGDMHIGN. The 'KMSKS' region motif lies at 235–239; the sequence is KMSKR. Position 238 (lysine 238) interacts with ATP.

This sequence belongs to the class-I aminoacyl-tRNA synthetase family. Glutamate--tRNA ligase type 1 subfamily. In terms of assembly, monomer.

The protein localises to the cytoplasm. It carries out the reaction tRNA(Glu) + L-glutamate + ATP = L-glutamyl-tRNA(Glu) + AMP + diphosphate. Catalyzes the attachment of glutamate to tRNA(Glu) in a two-step reaction: glutamate is first activated by ATP to form Glu-AMP and then transferred to the acceptor end of tRNA(Glu). The chain is Glutamate--tRNA ligase 1 from Campylobacter jejuni subsp. jejuni serotype O:23/36 (strain 81-176).